We begin with the raw amino-acid sequence, 206 residues long: Probable glutathione S-transferase 7 (206 aa).

The region spanning 2 to 79 is the GST N-terminal domain; the sequence is VHYKVSYFPI…YLARQFGING (78 aa). Residues Tyr8, Trp39, Lys43, 49 to 51, and 63 to 64 contribute to the glutathione site; these read GQL and QS. The region spanning 81 to 206 is the GST C-terminal domain; sequence CAWEEAQVNS…WLETRPVTPF (126 aa).

It belongs to the GST superfamily. Sigma family.

The catalysed reaction is RX + glutathione = an S-substituted glutathione + a halide anion + H(+). In terms of biological role, conjugation of reduced glutathione to a wide number of exogenous and endogenous hydrophobic electrophiles. May play a role in the detoxification of reactive oxygen species produced during pathogenic bacterial infection. The protein is Probable glutathione S-transferase 7 (gst-7) of Caenorhabditis elegans.